The following is a 328-amino-acid chain: C-type lectin domain family 11 member A (328 aa).

An N-terminal signal peptide occupies residues 1-21 (MQAAWLLGALLVPHLLSFGHG). The segment at 58-111 (PTGVGNKDNLAENSEGKEVWEATETQGEEEEEETTTTPSSSPTPFPSPSPTSED) is disordered. In terms of domain architecture, C-type lectin spans 188–325 (LGHKCFLLSR…CERRLYFVCE (138 aa)). 2 disulfides stabilise this stretch: cysteine 209–cysteine 324 and cysteine 301–cysteine 316.

Post-translationally, O-glycosylated. Probably sulfated on the O-glycans.

It is found in the cytoplasm. Its subcellular location is the secreted. In terms of biological role, promotes osteogenesis by stimulating the differentiation of mesenchymal progenitors into mature osteoblasts. Important for repair and maintenance of adult bone. The polypeptide is C-type lectin domain family 11 member A (Clec11a) (Rattus norvegicus (Rat)).